A 232-amino-acid chain; its full sequence is 7-cyano-7-deazaguanine synthase (232 aa).

8 to 18 (FSGGQDSTTCL) is a binding site for ATP. Residues Cys-187, Cys-196, Cys-199, and Cys-202 each contribute to the Zn(2+) site.

It belongs to the QueC family. Requires Zn(2+) as cofactor.

The enzyme catalyses 7-carboxy-7-deazaguanine + NH4(+) + ATP = 7-cyano-7-deazaguanine + ADP + phosphate + H2O + H(+). It participates in purine metabolism; 7-cyano-7-deazaguanine biosynthesis. Its function is as follows. Catalyzes the ATP-dependent conversion of 7-carboxy-7-deazaguanine (CDG) to 7-cyano-7-deazaguanine (preQ(0)). The sequence is that of 7-cyano-7-deazaguanine synthase from Shewanella denitrificans (strain OS217 / ATCC BAA-1090 / DSM 15013).